The primary structure comprises 283 residues: Probable endonuclease 4 (283 aa).

Zn(2+) is bound by residues histidine 69, histidine 109, glutamate 145, aspartate 179, histidine 182, histidine 216, aspartate 229, histidine 231, and glutamate 261.

Belongs to the AP endonuclease 2 family. The cofactor is Zn(2+).

The enzyme catalyses Endonucleolytic cleavage to 5'-phosphooligonucleotide end-products.. Its function is as follows. Endonuclease IV plays a role in DNA repair. It cleaves phosphodiester bonds at apurinic or apyrimidinic (AP) sites, generating a 3'-hydroxyl group and a 5'-terminal sugar phosphate. The chain is Probable endonuclease 4 from Desulfosudis oleivorans (strain DSM 6200 / JCM 39069 / Hxd3) (Desulfococcus oleovorans).